Consider the following 298-residue polypeptide: 4-hydroxy-tetrahydrodipicolinate synthase (298 aa).

Position 48 (Thr48) interacts with pyruvate. Tyr137 serves as the catalytic Proton donor/acceptor. Lys166 (schiff-base intermediate with substrate) is an active-site residue. A pyruvate-binding site is contributed by Ile207.

The protein belongs to the DapA family. In terms of assembly, homotetramer; dimer of dimers.

The protein resides in the cytoplasm. The enzyme catalyses L-aspartate 4-semialdehyde + pyruvate = (2S,4S)-4-hydroxy-2,3,4,5-tetrahydrodipicolinate + H2O + H(+). Its pathway is amino-acid biosynthesis; L-lysine biosynthesis via DAP pathway; (S)-tetrahydrodipicolinate from L-aspartate: step 3/4. In terms of biological role, catalyzes the condensation of (S)-aspartate-beta-semialdehyde [(S)-ASA] and pyruvate to 4-hydroxy-tetrahydrodipicolinate (HTPA). The sequence is that of 4-hydroxy-tetrahydrodipicolinate synthase from Campylobacter jejuni subsp. jejuni serotype O:23/36 (strain 81-176).